A 42-amino-acid chain; its full sequence is Iota-conotoxin-like R11.15 (42 aa).

Disulfide bonds link Cys5–Cys19, Cys12–Cys22, Cys18–Cys27, and Cys21–Cys36.

The protein belongs to the conotoxin I1 superfamily. Expressed by the venom duct.

It is found in the secreted. In terms of biological role, iota-conotoxins bind to voltage-gated sodium channels (Nav) and act as agonists by shifting the voltage-dependence of activation to more hyperpolarized levels. Produces general excitatory symptoms. This is Iota-conotoxin-like R11.15 from Conus radiatus (Rayed cone).